Reading from the N-terminus, the 511-residue chain is Putative polyol transporter 2 (511 aa).

Helical transmembrane passes span Phe-25–Gly-45, Val-63–Ala-83, Tyr-94–Thr-114, Pro-117–Ala-137, Phe-156–Ala-176, Phe-186–Pro-206, Ile-284–Val-304, Leu-324–Val-344, Ala-351–Leu-371, Trp-384–Ala-404, Gly-424–Leu-444, and Gly-454–Leu-474.

The protein belongs to the major facilitator superfamily. Sugar transporter (TC 2.A.1.1) family.

It is found in the membrane. Its function is as follows. Plasma membrane sugar-proton symporter. This chain is Putative polyol transporter 2 (PLT2), found in Arabidopsis thaliana (Mouse-ear cress).